Reading from the N-terminus, the 612-residue chain is U-box domain-containing protein 11 (612 aa).

The stretch at 127-196 forms a coiled coil; that stretch reads DEVGEQVELA…LHFGEEEEKQ (70 aa). The U-box domain occupies 240-314; that stretch reads TIPVDFLCPV…SRWCAEHNIE (75 aa). ARM repeat units follow at residues 363 to 402, 404 to 443, 445 to 484, 486 to 526, and 528 to 567; these read TDNR…NLSI, ENNK…SLSL, DENK…NLCI, HGNK…VLAN, and QDAK…SLCK.

The enzyme catalyses S-ubiquitinyl-[E2 ubiquitin-conjugating enzyme]-L-cysteine + [acceptor protein]-L-lysine = [E2 ubiquitin-conjugating enzyme]-L-cysteine + N(6)-ubiquitinyl-[acceptor protein]-L-lysine.. It functions in the pathway protein modification; protein ubiquitination. Functionally, functions as an E3 ubiquitin ligase. This Arabidopsis thaliana (Mouse-ear cress) protein is U-box domain-containing protein 11 (PUB11).